A 2555-amino-acid chain; its full sequence is Plipastatin synthase subunit C (2555 aa).

The condensation 1 stretch occupies residues 7 to 306 (IQDIYPLSFM…NTIPIRAQSD (300 aa)). Residues 491-894 (TYAELDMYAS…SIEGVREAAV (404 aa)) are adenylation 1. The 76-residue stretch at 967–1042 (APRNVTEMKL…GLATVIREGT (76 aa)) folds into the Carrier 1 domain. Serine 1002 is modified (O-(pantetheine 4'-phosphoryl)serine). Residues 1054–1344 (KQETYPVSSA…NTLALRTRPE (291 aa)) form a condensation 2 region. An adenylation 2 region spans residues 1532–1927 (TYEDLNSWAN…QIDGVKEAAV (396 aa)). The region spanning 2003–2077 (PPRNELEEQL…DLSPFIRKSE (75 aa)) is the Carrier 2 domain. An O-(pantetheine 4'-phosphoryl)serine modification is found at serine 2038. The tract at residues 2085 to 2548 (IQGDVPWTPV…SLTAEDLDSI (464 aa)) is epimerization 3.

Belongs to the ATP-dependent AMP-binding enzyme family. Requires pantetheine 4'-phosphate as cofactor.

Its function is as follows. This protein is a multifunctional enzyme, able to activate and polymerize the amino acids Glu and Ala/Val as part of the biosynthesis of the lipopeptide antibiotic plipastatin. The Ala/Val residue is further epimerized to the D-isomer form. The activation sites for these amino acids consist of individual domains. This chain is Plipastatin synthase subunit C (ppsC), found in Bacillus subtilis (strain 168).